The following is an 85-amino-acid chain: 4-hydroxyphenylacetate decarboxylase small subunit (85 aa).

8 residues coordinate [4Fe-4S] cluster: His4, Cys7, Cys20, Cys34, Cys43, Cys46, Cys60, and Cys78.

It belongs to the HPA decarboxylase small subunit family. In terms of assembly, heterooctamer consisting of 4 large (HpdB) subunits and 4 small (HpdC) subunits, arranged as a tetramer of heterodimers. It depends on [4Fe-4S] cluster as a cofactor.

The enzyme catalyses 4-hydroxyphenylacetate + H(+) = 4-methylphenol + CO2. The catalysed reaction is 3,4-dihydroxyphenylacetate + H(+) = 4-methylcatechol + CO2. Component of the HPA decarboxylase that decarboxylates phenylacetates with a hydroxyl group in the p-position. Active toward 4-hydroxyphenylacetate and 3,4-dihydroxyphenylacetate, forming 4-methylphenol and 4-methylcatechol, respectively. Is likely involved in the catabolism of aromatic amino acids such as tyrosine fermentation. 4-methylphenol (p-cresol) formation provides metabolic toxicity, which allows an active suppression of other microbes and may provide growth advantages for the producers in highly competitive environments. The small subunit is essential for enzymatic activity of HPA decarboxylase, and also seems to be involved in the regulation of the enzyme oligomeric state and catalytic activity. The sequence is that of 4-hydroxyphenylacetate decarboxylase small subunit from Clostridioides difficile (strain CD196) (Peptoclostridium difficile).